The following is a 158-amino-acid chain: SsrA-binding protein (158 aa).

Residues 133–158 (QLHDKRETEKKRDWNKEKGRLLRDKH) form a disordered region.

It belongs to the SmpB family.

Its subcellular location is the cytoplasm. In terms of biological role, required for rescue of stalled ribosomes mediated by trans-translation. Binds to transfer-messenger RNA (tmRNA), required for stable association of tmRNA with ribosomes. tmRNA and SmpB together mimic tRNA shape, replacing the anticodon stem-loop with SmpB. tmRNA is encoded by the ssrA gene; the 2 termini fold to resemble tRNA(Ala) and it encodes a 'tag peptide', a short internal open reading frame. During trans-translation Ala-aminoacylated tmRNA acts like a tRNA, entering the A-site of stalled ribosomes, displacing the stalled mRNA. The ribosome then switches to translate the ORF on the tmRNA; the nascent peptide is terminated with the 'tag peptide' encoded by the tmRNA and targeted for degradation. The ribosome is freed to recommence translation, which seems to be the essential function of trans-translation. This is SsrA-binding protein from Beijerinckia indica subsp. indica (strain ATCC 9039 / DSM 1715 / NCIMB 8712).